The chain runs to 861 residues: Nuclear cap-binding protein complex subunit 1 (861 aa).

Residues 22 to 30 carry the Nuclear localization signal motif; sequence RMPKRQRIP. Residues 36 to 264 form the MIF4G domain; the sequence is CKEMMPDIRT…LVRVVLPNVK (229 aa).

The protein belongs to the NCBP1 family. As to quaternary structure, component of the nuclear cap-binding complex (CBC), a heterodimer composed of STO1/CBC1 and CBC2 that interacts with capped RNAs. The complex interacts strongly with the importin subunit alpha SRP1. The SRP1-CBC trimer also binds to capped RNAs, but formation of the importin alpha/beta heterodimer upon binding of KAP95 to SRP1 in the cytoplasm causes dissociation of CBC from the RNA. The CBC complex is part of the commitment complex 1 (CC1), binding to the cap of pre-mRNA and interacting with U1 snRNP subunits MUD2 and SNU56. The CBC complex is part of the NRD1 complex, composed of CBC2, NAB1, NRD1, SEN1 and STO1/CBC2. The CBC complex also interacts with NPL3 and eIF4G (TIF4631 and TIF4632).

It is found in the nucleus. It localises to the cytoplasm. Its subcellular location is the perinuclear region. Its function is as follows. Component of the CBC complex, which binds co-transcriptionally to the 5'-cap of pre-mRNAs and is involved in maturation, export and degradation of nuclear mRNAs. The CBC complex is required for efficient pre-mRNA splicing through efficient commitment complex and spliceosome formation. Together with NPL3, the CBC complex is required for export of mRNAs out of the nucleus. The CBC complex is also involved in nuclear mRNA degradation, probably by directing the mRNAs to the sites of degradation. Affects replication of the positive-strand RNA virus BMV. The sequence is that of Nuclear cap-binding protein complex subunit 1 (STO1) from Saccharomyces cerevisiae (strain ATCC 204508 / S288c) (Baker's yeast).